The chain runs to 458 residues: Methylenetetrahydrofolate--tRNA-(uracil-5-)-methyltransferase TrmFO (458 aa).

11–16 (GGGMAG) is a binding site for FAD.

It belongs to the MnmG family. TrmFO subfamily. The cofactor is FAD.

It localises to the cytoplasm. It catalyses the reaction uridine(54) in tRNA + (6R)-5,10-methylene-5,6,7,8-tetrahydrofolate + NADH + H(+) = 5-methyluridine(54) in tRNA + (6S)-5,6,7,8-tetrahydrofolate + NAD(+). The catalysed reaction is uridine(54) in tRNA + (6R)-5,10-methylene-5,6,7,8-tetrahydrofolate + NADPH + H(+) = 5-methyluridine(54) in tRNA + (6S)-5,6,7,8-tetrahydrofolate + NADP(+). Its function is as follows. Catalyzes the folate-dependent formation of 5-methyl-uridine at position 54 (M-5-U54) in all tRNAs. In Jannaschia sp. (strain CCS1), this protein is Methylenetetrahydrofolate--tRNA-(uracil-5-)-methyltransferase TrmFO.